The sequence spans 603 residues: Methionine--tRNA ligase (603 aa).

Positions 14 to 24 (PYANGPRHIGH) match the 'HIGH' region motif. Zn(2+)-binding residues include C146, C149, C159, and C162. The 'KMSKS' region signature appears at 354–358 (KFSSS). S357 provides a ligand contact to ATP.

It belongs to the class-I aminoacyl-tRNA synthetase family. MetG type 1 subfamily. In terms of assembly, monomer. The cofactor is Zn(2+).

It localises to the cytoplasm. The catalysed reaction is tRNA(Met) + L-methionine + ATP = L-methionyl-tRNA(Met) + AMP + diphosphate. Functionally, is required not only for elongation of protein synthesis but also for the initiation of all mRNA translation through initiator tRNA(fMet) aminoacylation. This chain is Methionine--tRNA ligase, found in Salinispora tropica (strain ATCC BAA-916 / DSM 44818 / JCM 13857 / NBRC 105044 / CNB-440).